The chain runs to 524 residues: Probable cytochrome P450 519C1 (524 aa).

A helical membrane pass occupies residues 1-21 (MNILLLIFYFLVCFLIFDFIK). Position 470 (Cys470) interacts with heme.

The protein belongs to the cytochrome P450 family. The cofactor is heme.

It is found in the membrane. The protein is Probable cytochrome P450 519C1 (cyp519C1) of Dictyostelium discoideum (Social amoeba).